Reading from the N-terminus, the 148-residue chain is Snaclec 7 (148 aa).

Positions 1-23 are cleaved as a signal peptide; the sequence is MGRFIFVSFGLLVVFLSLSGTGA. 3 cysteine pairs are disulfide-bonded: cysteine 27–cysteine 38, cysteine 55–cysteine 144, and cysteine 121–cysteine 136. Residues 34 to 145 enclose the C-type lectin domain; it reads HERHCYKVIN…CSSTHPFVCK (112 aa).

Belongs to the snaclec family. Heterodimer; disulfide-linked. In terms of tissue distribution, expressed by the venom gland.

It localises to the secreted. Its function is as follows. Interferes with one step of hemostasis (modulation of platelet aggregation, or coagulation cascade, for example). This Echis pyramidum leakeyi (Leakey's carpet viper) protein is Snaclec 7.